We begin with the raw amino-acid sequence, 207 residues long: Superoxide dismutase [Mn] (207 aa).

Mn(2+) is bound by residues histidine 28, histidine 76, aspartate 160, and histidine 164.

This sequence belongs to the iron/manganese superoxide dismutase family. It depends on Mn(2+) as a cofactor.

The enzyme catalyses 2 superoxide + 2 H(+) = H2O2 + O2. Its function is as follows. Destroys superoxide anion radicals which are normally produced within the cells and which are toxic to biological systems. In Mycobacterium leprae (strain TN), this protein is Superoxide dismutase [Mn] (sodA).